The sequence spans 342 residues: Foldase protein PrsA (342 aa).

The signal sequence occupies residues 1 to 22 (MVSVKKIVASALVGVLMFSAVG). A lipid anchor (N-palmitoyl cysteine) is attached at cysteine 23. The S-diacylglycerol cysteine moiety is linked to residue cysteine 23. Residues 189–284 (DSGVLTKHLL…FGYHIIQAGA (96 aa)) form the PpiC domain.

Belongs to the PrsA family.

The protein localises to the cell membrane. The catalysed reaction is [protein]-peptidylproline (omega=180) = [protein]-peptidylproline (omega=0). Its function is as follows. Plays a major role in protein secretion by helping the post-translocational extracellular folding of several secreted proteins. The protein is Foldase protein PrsA of Clostridium perfringens (strain ATCC 13124 / DSM 756 / JCM 1290 / NCIMB 6125 / NCTC 8237 / Type A).